The primary structure comprises 35 residues: Pheromone-binding protein (35 aa).

It belongs to the PBP/GOBP family. As to expression, antenna.

Its function is as follows. This major soluble protein in olfactory sensilla of male moths might serve to solubilize the extremely hydrophobic pheromone molecules and to transport pheromone through the aqueous lymph to receptors located on olfactory cilia. This Hyalophora cecropia (Cecropia moth) protein is Pheromone-binding protein.